Here is an 81-residue protein sequence, read N- to C-terminus: Beta-defensin 34 (81 aa).

The signal sequence occupies residues 1–20 (MKTFLFLFAVLFFWSQPRMH). Disulfide bonds link Cys28–Cys55, Cys35–Cys49, and Cys39–Cys56. Polar residues predominate over residues 62–72 (CGRSKGNQSDE). The segment at 62-81 (CGRSKGNQSDEGSGHMGTRG) is disordered.

Belongs to the beta-defensin family. In terms of tissue distribution, only expressed in epididymis (caput, corpus and cauda).

Its subcellular location is the secreted. Has antibacterial activity. This chain is Beta-defensin 34 (Defb34), found in Mus musculus (Mouse).